A 399-amino-acid polypeptide reads, in one-letter code: Phosphate acyltransferase (399 aa).

This sequence belongs to the PlsX family. Homodimer. Probably interacts with PlsY.

It is found in the cytoplasm. It catalyses the reaction a fatty acyl-[ACP] + phosphate = an acyl phosphate + holo-[ACP]. It functions in the pathway lipid metabolism; phospholipid metabolism. Its function is as follows. Catalyzes the reversible formation of acyl-phosphate (acyl-PO(4)) from acyl-[acyl-carrier-protein] (acyl-ACP). This enzyme utilizes acyl-ACP as fatty acyl donor, but not acyl-CoA. This Rhodobacter capsulatus (Rhodopseudomonas capsulata) protein is Phosphate acyltransferase.